Here is a 125-residue protein sequence, read N- to C-terminus: Large ribosomal subunit protein bL12 (125 aa).

The protein belongs to the bacterial ribosomal protein bL12 family. As to quaternary structure, homodimer. Part of the ribosomal stalk of the 50S ribosomal subunit. Forms a multimeric L10(L12)X complex, where L10 forms an elongated spine to which 2 to 4 L12 dimers bind in a sequential fashion. Binds GTP-bound translation factors.

In terms of biological role, forms part of the ribosomal stalk which helps the ribosome interact with GTP-bound translation factors. Is thus essential for accurate translation. The chain is Large ribosomal subunit protein bL12 from Francisella tularensis subsp. novicida (strain U112).